We begin with the raw amino-acid sequence, 514 residues long: Peptide chain release factor 3 (514 aa).

One can recognise a tr-type G domain in the interval 8–268 (KKRRTFAIIS…TFLEFAPEPH (261 aa)). Residues 17-24 (SHPDAGKT), 85-89 (DTPGH), and 139-142 (NKLD) contribute to the GTP site.

It belongs to the TRAFAC class translation factor GTPase superfamily. Classic translation factor GTPase family. PrfC subfamily.

The protein localises to the cytoplasm. Increases the formation of ribosomal termination complexes and stimulates activities of RF-1 and RF-2. It binds guanine nucleotides and has strong preference for UGA stop codons. It may interact directly with the ribosome. The stimulation of RF-1 and RF-2 is significantly reduced by GTP and GDP, but not by GMP. The chain is Peptide chain release factor 3 from Streptococcus pyogenes serotype M5 (strain Manfredo).